The primary structure comprises 1499 residues: DNA-directed RNA polymerase subunit beta' (1499 aa).

Zn(2+) contacts are provided by cysteine 67, cysteine 69, cysteine 82, and cysteine 85. Mg(2+)-binding residues include aspartate 497, aspartate 499, and aspartate 501. Zn(2+) is bound by residues cysteine 865, cysteine 940, cysteine 947, and cysteine 950. The segment at 1475 to 1499 is disordered; that stretch reads YEPSQRAYQEDEYAKKEDGEIAIDD. Residues 1482 to 1493 are compositionally biased toward basic and acidic residues; the sequence is YQEDEYAKKEDG.

This sequence belongs to the RNA polymerase beta' chain family. In terms of assembly, the RNAP catalytic core consists of 2 alpha, 1 beta, 1 beta' and 1 omega subunit. When a sigma factor is associated with the core the holoenzyme is formed, which can initiate transcription. Mg(2+) is required as a cofactor. It depends on Zn(2+) as a cofactor.

The enzyme catalyses RNA(n) + a ribonucleoside 5'-triphosphate = RNA(n+1) + diphosphate. Its function is as follows. DNA-dependent RNA polymerase catalyzes the transcription of DNA into RNA using the four ribonucleoside triphosphates as substrates. The sequence is that of DNA-directed RNA polymerase subunit beta' from Chloroherpeton thalassium (strain ATCC 35110 / GB-78).